Here is a 148-residue protein sequence, read N- to C-terminus: Lipoprotein signal peptidase (148 aa).

Helical transmembrane passes span 57 to 77 and 88 to 105; these read VLLVLVTLLIMIGVIYYFIKY and VSFIVSGALGNLYDRIFY. Catalysis depends on residues aspartate 110 and aspartate 129. Residues 124–144 form a helical membrane-spanning segment; the sequence is TFNIADILVVVGTIMLAIFLL.

The protein belongs to the peptidase A8 family.

The protein localises to the cell membrane. It carries out the reaction Release of signal peptides from bacterial membrane prolipoproteins. Hydrolyzes -Xaa-Yaa-Zaa-|-(S,diacylglyceryl)Cys-, in which Xaa is hydrophobic (preferably Leu), and Yaa (Ala or Ser) and Zaa (Gly or Ala) have small, neutral side chains.. Its pathway is protein modification; lipoprotein biosynthesis (signal peptide cleavage). Functionally, this protein specifically catalyzes the removal of signal peptides from prolipoproteins. The protein is Lipoprotein signal peptidase of Clostridium novyi (strain NT).